The primary structure comprises 571 residues: Podocalyxin (571 aa).

The signal sequence occupies residues 1 to 22 (MRPAPPPPLLLLLLLLPPPSLS). The Extracellular segment spans residues 23–474 (HDGTIIAATS…EETEDRFSMP (452 aa)). The interval 94-361 (NTVIAPDQDE…QGDDRIKCES (268 aa)) is disordered. Polar residues predominate over residues 106–116 (STNPTIATSDS). The N-linked (GlcNAc...) asparagine glycan is linked to Asn-123. Polar residues-rich tracts occupy residues 126-144 (ILPS…TQTA), 151-169 (NPGT…QTTS), 176-203 (KPSS…STTL), and 218-245 (TASS…SSVT). Asn-199 is a glycosylation site (N-linked (GlcNAc...) asparagine). A compositionally biased stretch (low complexity) spans 282-300 (TTSLPSETESLESPSSESP). Over residues 301–311 (SQPPKLRPTGP) the composition is skewed to pro residues. Residues 312-322 (PSSGSSGPAAS) are compositionally biased toward low complexity. N-linked (GlcNAc...) asparagine glycosylation is found at Asn-373 and Asn-383. The helical transmembrane segment at 475–495 (LIITIVCMASFLLLVAALYGC) threads the bilayer. The Cytoplasmic segment spans residues 496–571 (CHQRLSQRKD…DLDEEEDTHL (76 aa)). Thr-531 bears the Phosphothreonine mark. Ser-550 carries the post-translational modification Phosphoserine. Thr-569 carries the phosphothreonine modification.

The protein belongs to the podocalyxin family. As to quaternary structure, found in a complex with EZR, PODXL and NHERF2. Associates with the actin cytoskeleton through complex formation with EZR and NHERF2. Interacts (via the C-terminal PDZ-binding motif DTHL) with NHERF1 (via the PDZ domains); interaction is not detected in glomerular epithelium cells. Interacts (via the C-terminal PDZ-binding motif DTHL) with NHERF2 (via the PDZ 1 domain); interaction is detected in glomerular epithelium cells. Interacts with EZR. Monomer; when associated with the membrane raft. Oligomer; when integrated in the apical membrane. Interacts with NHERF2. Interacts (via the C-terminal PDZ-binding motif DTHL) with NHERF1 (via the PDZ domains); the interaction take place early in the secretory pathway and is necessary for its apical membrane sorting. In terms of processing, N- and O-linked glycosylated. Sialoglycoprotein. In terms of tissue distribution, expressed in glomerular and tubular epithelial cells and peritubular capillaries of the kidney (at protein level). Expressed in heart, lung, renal cortex and medulla, kidney and muscle.

Its subcellular location is the apical cell membrane. It is found in the membrane raft. The protein localises to the cell projection. The protein resides in the lamellipodium. It localises to the filopodium. Its subcellular location is the ruffle. It is found in the microvillus. The protein localises to the membrane. Involved in the regulation of both adhesion and cell morphology and cancer progression. Functions as an anti-adhesive molecule that maintains an open filtration pathway between neighboring foot processes in the podocyte by charge repulsion. Acts as a pro-adhesive molecule, enhancing the adherence of cells to immobilized ligands, increasing the rate of migration and cell-cell contacts in an integrin-dependent manner. Induces the formation of apical actin-dependent microvilli. Involved in the formation of a preapical plasma membrane subdomain to set up initial epithelial polarization and the apical lumen formation during renal tubulogenesis. Plays a role in cancer development and aggressiveness by inducing cell migration and invasion through its interaction with the actin-binding protein EZR. Affects EZR-dependent signaling events, leading to increased activities of the MAPK and PI3K pathways in cancer cells. The chain is Podocalyxin (PODXL) from Canis lupus familiaris (Dog).